Consider the following 367-residue polypeptide: NAD(P)H-quinone oxidoreductase subunit 1, chloroplastic (367 aa).

The next 8 helical transmembrane spans lie at 29-49 (WIPL…LVVV), 96-116 (VLLF…SYLI), 128-148 (INLG…GLLM), 176-196 (LALC…IDIV), 204-224 (ILGW…IAAL), 266-286 (LVSA…PIPI), 304-324 (VISA…FLFL), and 347-367 (FLLP…IALL).

The protein belongs to the complex I subunit 1 family. In terms of assembly, NDH is composed of at least 16 different subunits, 5 of which are encoded in the nucleus.

It is found in the plastid. The protein localises to the chloroplast thylakoid membrane. It catalyses the reaction a plastoquinone + NADH + (n+1) H(+)(in) = a plastoquinol + NAD(+) + n H(+)(out). The enzyme catalyses a plastoquinone + NADPH + (n+1) H(+)(in) = a plastoquinol + NADP(+) + n H(+)(out). Its function is as follows. NDH shuttles electrons from NAD(P)H:plastoquinone, via FMN and iron-sulfur (Fe-S) centers, to quinones in the photosynthetic chain and possibly in a chloroplast respiratory chain. The immediate electron acceptor for the enzyme in this species is believed to be plastoquinone. Couples the redox reaction to proton translocation, and thus conserves the redox energy in a proton gradient. The protein is NAD(P)H-quinone oxidoreductase subunit 1, chloroplastic of Mesostigma viride (Green alga).